The following is a 642-amino-acid chain: Capsid vertex component 2 (642 aa).

Residues 1–48 (MSLLHTFWRLPVAVFFEPHEENVLRCPERVLRRLLEDAAVTMRGGGWR) are interaction with major capsid protein/MCP. A disordered region spans residues 97 to 125 (DEGPSPRTLLQPPCRPRSSSPGTGVAGAS).

It belongs to the herpesviridae CVC2 protein family. As to quaternary structure, heterodimerizes with CVC1. Interacts with major capsid protein/MCP and triplex capsid protein 1/TRX1 at the pentamer vertices. Interacts with the large tegument protein/LTP.

It is found in the virion. Its subcellular location is the host nucleus. Capsid vertex-specific component that plays a role during viral DNA encapsidation, assuring correct genome cleavage and presumably stabilizing capsids that contain full-length viral genomes. Participates in the interaction between the capsid and the tegument through interaction with the large tegument protein/LTP. This is Capsid vertex component 2 from Homo sapiens (Human).